The sequence spans 302 residues: Putative peptide permease protein BRA0407/BS1330_II0404 (302 aa).

The segment at Met-1–Gly-22 is disordered. The next 6 helical transmembrane spans lie at Ile-38–Leu-58, Leu-101–Ile-121, Ile-147–Ile-167, Ala-200–Ala-222, Ile-230–Trp-250, and Trp-268–Gly-288. Residues Gly-97–Gly-288 form the ABC transmembrane type-1 domain.

This sequence belongs to the binding-protein-dependent transport system permease family. As to quaternary structure, the complex is composed of two ATP-binding proteins (BRA0404 and BRA0405), two transmembrane proteins (BRA0407 and BRA0408) and a solute-binding protein (BRA0409).

It is found in the cell inner membrane. Its function is as follows. Probably part of an ABC transporter complex that could be involved in peptide import. Probably responsible for the translocation of the substrate across the membrane. This is Putative peptide permease protein BRA0407/BS1330_II0404 from Brucella suis biovar 1 (strain 1330).